The following is a 262-amino-acid chain: Ribose-5-phosphate isomerase A (262 aa).

Substrate contacts are provided by residues 33–36 (TGST), 89–92 (DGTD), and 102–105 (KGGG). The active-site Proton acceptor is Glu-111. Lys-129 provides a ligand contact to substrate.

It belongs to the ribose 5-phosphate isomerase family. Homodimer.

The enzyme catalyses aldehydo-D-ribose 5-phosphate = D-ribulose 5-phosphate. It participates in carbohydrate degradation; pentose phosphate pathway; D-ribose 5-phosphate from D-ribulose 5-phosphate (non-oxidative stage): step 1/1. Catalyzes the reversible conversion of ribose-5-phosphate to ribulose 5-phosphate. The sequence is that of Ribose-5-phosphate isomerase A from Jannaschia sp. (strain CCS1).